A 243-amino-acid chain; its full sequence is BTB/POZ domain-containing protein At4g08455 (243 aa).

Residues 19–51 are a coiled coil; it reads KECYVEAGETEEELKREIDDLKAKVAFLRLSSS. The BTB domain occupies 64 to 136; sequence TDVVLIASED…LYTAEACLDE (73 aa).

As to quaternary structure, interacts with CUL3A and CUL3B.

The protein operates within protein modification; protein ubiquitination. May act as a substrate-specific adapter of an E3 ubiquitin-protein ligase complex (CUL3-RBX1-BTB) which mediates the ubiquitination and subsequent proteasomal degradation of target proteins. In Arabidopsis thaliana (Mouse-ear cress), this protein is BTB/POZ domain-containing protein At4g08455.